Consider the following 473-residue polypeptide: Ribulose bisphosphate carboxylase large chain (473 aa).

Positions 116 and 166 each coordinate substrate. Lys168 functions as the Proton acceptor in the catalytic mechanism. Substrate is bound at residue Lys170. Lys194, Asp196, and Glu197 together coordinate Mg(2+). Lys194 carries the post-translational modification N6-carboxylysine. The active-site Proton acceptor is His287. Arg288, His320, and Ser372 together coordinate substrate.

The protein belongs to the RuBisCO large chain family. Type I subfamily. In terms of assembly, heterohexadecamer of 8 large chains and 8 small chains. Mg(2+) is required as a cofactor.

It carries out the reaction 2 (2R)-3-phosphoglycerate + 2 H(+) = D-ribulose 1,5-bisphosphate + CO2 + H2O. It catalyses the reaction D-ribulose 1,5-bisphosphate + O2 = 2-phosphoglycolate + (2R)-3-phosphoglycerate + 2 H(+). RuBisCO catalyzes two reactions: the carboxylation of D-ribulose 1,5-bisphosphate, the primary event in carbon dioxide fixation, as well as the oxidative fragmentation of the pentose substrate. Both reactions occur simultaneously and in competition at the same active site. This Halorhodospira halophila (strain DSM 244 / SL1) (Ectothiorhodospira halophila (strain DSM 244 / SL1)) protein is Ribulose bisphosphate carboxylase large chain.